The primary structure comprises 389 residues: DEAD-box ATP-dependent RNA helicase CshC (389 aa).

The Q motif signature appears at 1-26 (MIKDMQPFLQQAWEKAGFKELTEIQK). The 171-residue stretch at 29–199 (IPTILEGQDV…RDLAVEPQLV (171 aa)) folds into the Helicase ATP-binding domain. 42-49 (SPTGTGKT) serves as a coordination point for ATP. A DEAD box motif is present at residues 147 to 150 (DEFD). The Helicase C-terminal domain occupies 209-379 (LVEHTYIICE…TKPKAPKKKK (171 aa)). The tract at residues 368-389 (VETKPKAPKKKKPAFTGKKKPR) is disordered. Residues 373–389 (KAPKKKKPAFTGKKKPR) show a composition bias toward basic residues.

The catalysed reaction is ATP + H2O = ADP + phosphate + H(+). Its function is as follows. DEAD-box RNA helicase. Probably has an RNA-dependent ATPase activity and a 3' to 5' RNA helicase activity that uses the energy of ATP hydrolysis to destabilize and unwind short RNA duplexes. The polypeptide is DEAD-box ATP-dependent RNA helicase CshC (cshC) (Bacillus cereus (strain ATCC 14579 / DSM 31 / CCUG 7414 / JCM 2152 / NBRC 15305 / NCIMB 9373 / NCTC 2599 / NRRL B-3711)).